The primary structure comprises 257 residues: MTTAVRGLLLALAFLTRLPVWWLGPPRREDHAASLPAYPVVGLILGILLLALYALLQWFFPDQFVVQAALLVAAWALVTGLLHLDGLGDSADAWLGGHGDRLRSLEIMKDPRSGPAAVAVITLALVVKVAALAALLRLDAALAALLIAPVLGRAAAALLIAGTPYARKQGLAGPLAEAPATRWIGLTALGALLFVTALAGWAGLAAVLGVVAVGVWAQHLMMRRLDGFTGDTAGALVEVAELAALLGLLAVLANSAG.

The next 6 helical transmembrane spans lie at 4–24, 40–60, 64–84, 116–136, 140–160, and 193–213; these read AVRG…WWLG, VVGL…QWFF, FVVQ…LLHL, AAVA…AALL, AALA…ALLI, and LFVT…VVAV.

Belongs to the CobS family. Mg(2+) serves as cofactor.

Its subcellular location is the cell inner membrane. It carries out the reaction alpha-ribazole + adenosylcob(III)inamide-GDP = adenosylcob(III)alamin + GMP + H(+). The catalysed reaction is alpha-ribazole 5'-phosphate + adenosylcob(III)inamide-GDP = adenosylcob(III)alamin 5'-phosphate + GMP + H(+). The protein operates within cofactor biosynthesis; adenosylcobalamin biosynthesis; adenosylcobalamin from cob(II)yrinate a,c-diamide: step 7/7. Its function is as follows. Joins adenosylcobinamide-GDP and alpha-ribazole to generate adenosylcobalamin (Ado-cobalamin). Also synthesizes adenosylcobalamin 5'-phosphate from adenosylcobinamide-GDP and alpha-ribazole 5'-phosphate. The protein is Adenosylcobinamide-GDP ribazoletransferase of Alkalilimnicola ehrlichii (strain ATCC BAA-1101 / DSM 17681 / MLHE-1).